Here is a 161-residue protein sequence, read N- to C-terminus: Large ribosomal subunit protein uL16 (161 aa).

The interval 140 to 161 (LNKGNYKPAKTPVTADDSESSS) is disordered.

Belongs to the universal ribosomal protein uL16 family. Part of the 50S ribosomal subunit.

Binds 23S rRNA and is also seen to make contacts with the A and possibly P site tRNAs. The protein is Large ribosomal subunit protein uL16 of Prochlorococcus marinus (strain NATL2A).